The primary structure comprises 107 residues: Insulin (107 aa).

An N-terminal signal peptide occupies residues 1-24 (MALWIRSLPLLALLVFSGPGTSYA). 3 disulfide bridges follow: cysteine 31-cysteine 93, cysteine 43-cysteine 106, and cysteine 92-cysteine 97. Positions 57–84 (DVEQPLVSSPLRGEAGVLPFQQEEYEKV) are cleaved as a propeptide — c peptide.

Belongs to the insulin family. Heterodimer of a B chain and an A chain linked by two disulfide bonds.

Its subcellular location is the secreted. Functionally, insulin decreases blood glucose concentration. It increases cell permeability to monosaccharides, amino acids and fatty acids. It accelerates glycolysis, the pentose phosphate cycle, and glycogen synthesis in liver. The protein is Insulin (INS) of Gallus gallus (Chicken).